A 90-amino-acid polypeptide reads, in one-letter code: Mitochondrial import inner membrane translocase subunit Tim10 (90 aa).

The Twin CX3C motif signature appears at 29–54 (CHRKCVPPHYKEAELSKGESVCLDRC). Intrachain disulfides connect Cys29–Cys54 and Cys33–Cys50.

This sequence belongs to the small Tim family. In terms of assembly, heterohexamer; composed of 3 copies of TIMM9 and 3 copies of TIMM10/TIM10A, named soluble 70 kDa complex. The complex forms a 6-bladed alpha-propeller structure and associates with the TIMM22 component of the TIM22 complex. Interacts with multi-pass transmembrane proteins in transit. Also forms a complex composed of TIMM9, TIMM10/TIM10A and FXC1/TIM10B.

It is found in the mitochondrion inner membrane. Functionally, mitochondrial intermembrane chaperone that participates in the import and insertion of multi-pass transmembrane proteins into the mitochondrial inner membrane. May also be required for the transfer of beta-barrel precursors from the TOM complex to the sorting and assembly machinery (SAM complex) of the outer membrane. Acts as a chaperone-like protein that protects the hydrophobic precursors from aggregation and guide them through the mitochondrial intermembrane space. This is Mitochondrial import inner membrane translocase subunit Tim10 (Timm10) from Rattus norvegicus (Rat).